Consider the following 1357-residue polypeptide: Kinectin (1357 aa).

Residues 1–6 are Cytoplasmic-facing; the sequence is MEFYES. Residues 7–29 traverse the membrane as a helical; Signal-anchor for type II membrane protein segment; that stretch reads AYFIVLIPSIVITVIFLFFWLFM. The Lumenal segment spans residues 30 to 1357; that stretch reads KETLYDEVLA…KEKEHYQVLE (1328 aa). Disordered regions lie at residues 48-81 and 103-218; these read IPTK…ESVP and NVVE…KQKT. Position 75 is a phosphoserine; by FAM20C (S75). The residue at position 77 (S77) is a Phosphoserine. The span at 121–135 shows a compositional bias: basic and acidic residues; it reads QKPVLEEQVIKESDA. Residue T153 is modified to Phosphothreonine. S156 carries the phosphoserine modification. Basic residues predominate over residues 161–171; that stretch reads SKKKPGQKKSK. 5 N-linked (GlcNAc...) asparagine glycosylation sites follow: N172, N435, N772, N904, and N1055. Residues 172 to 182 are compositionally biased toward basic and acidic residues; the sequence is NGSDDQDKKVE. Positions 330–1356 form a coiled coil; that stretch reads LIHQLQEKDK…TKEKEHYQVL (1027 aa). Residue S1084 is modified to Phosphoserine. N1088 and N1263 each carry an N-linked (GlcNAc...) asparagine glycan. Residue S1313 is modified to Phosphoserine. N1329 carries an N-linked (GlcNAc...) asparagine glycan.

Belongs to the kinectin family. In terms of assembly, parallel homodimers formed between the membrane-bound and the cytosolic form, and also between 2 cytosolic forms. As to expression, high levels in peripheral blood lymphocytes, testis and ovary, lower levels in spleen, thymus, prostate, small intestine and colon.

The protein resides in the endoplasmic reticulum membrane. Receptor for kinesin thus involved in kinesin-driven vesicle motility. Accumulates in integrin-based adhesion complexes (IAC) upon integrin aggregation by fibronectin. The protein is Kinectin (KTN1) of Homo sapiens (Human).